A 520-amino-acid chain; its full sequence is UvrABC system protein C (520 aa).

One can recognise a GIY-YIG domain in the interval 11–89 (EEPGCYQFKD…IKKYQPKYNI (79 aa)). The 36-residue stretch at 195 to 230 (QDLIYDLRKEMETFAAAEEYEKALVIRDRIAAIENL) folds into the UVR domain.

It belongs to the UvrC family. As to quaternary structure, interacts with UvrB in an incision complex.

It localises to the cytoplasm. Functionally, the UvrABC repair system catalyzes the recognition and processing of DNA lesions. UvrC both incises the 5' and 3' sides of the lesion. The N-terminal half is responsible for the 3' incision and the C-terminal half is responsible for the 5' incision. The polypeptide is UvrABC system protein C (Methanospirillum hungatei JF-1 (strain ATCC 27890 / DSM 864 / NBRC 100397 / JF-1)).